We begin with the raw amino-acid sequence, 113 residues long: UPF0102 protein Dgeo_1894 (113 aa).

This sequence belongs to the UPF0102 family.

The sequence is that of UPF0102 protein Dgeo_1894 from Deinococcus geothermalis (strain DSM 11300 / CIP 105573 / AG-3a).